Consider the following 499-residue polypeptide: Bifunctional purine biosynthesis protein PurH (499 aa).

Positions 1-144 constitute an MGS-like domain; sequence MIKRALISVF…KNFKDVVVLT (144 aa).

Belongs to the PurH family.

It carries out the reaction (6R)-10-formyltetrahydrofolate + 5-amino-1-(5-phospho-beta-D-ribosyl)imidazole-4-carboxamide = 5-formamido-1-(5-phospho-D-ribosyl)imidazole-4-carboxamide + (6S)-5,6,7,8-tetrahydrofolate. The catalysed reaction is IMP + H2O = 5-formamido-1-(5-phospho-D-ribosyl)imidazole-4-carboxamide. The protein operates within purine metabolism; IMP biosynthesis via de novo pathway; 5-formamido-1-(5-phospho-D-ribosyl)imidazole-4-carboxamide from 5-amino-1-(5-phospho-D-ribosyl)imidazole-4-carboxamide (10-formyl THF route): step 1/1. It participates in purine metabolism; IMP biosynthesis via de novo pathway; IMP from 5-formamido-1-(5-phospho-D-ribosyl)imidazole-4-carboxamide: step 1/1. This chain is Bifunctional purine biosynthesis protein PurH, found in Clostridium botulinum (strain Okra / Type B1).